A 475-amino-acid chain; its full sequence is Cytochrome P450 monooxygenase opdE (475 aa).

A helical transmembrane segment spans residues 10–32 (VQNIPVLLLSCGFLAILFRSLVL). Position 457 (Cys-457) interacts with heme.

Belongs to the cytochrome P450 family. Requires heme as cofactor.

The protein resides in the membrane. It functions in the pathway secondary metabolite biosynthesis. Functionally, cytochrome P450 monooxygenase; part of the gene cluster that mediates the biosynthesis of oxopyrrolidines, polyketide-amino acid hybrid compounds with feature structures of tetramic acid. Does not seem to play a role in oxopyrrolidines A and B biosynthesis. May be involved in further modifications of these oxopyrrolidines. The protein is Cytochrome P450 monooxygenase opdE of Penicillium oxalicum (strain 114-2 / CGMCC 5302) (Penicillium decumbens).